We begin with the raw amino-acid sequence, 127 residues long: Large ribosomal subunit protein bL17 (127 aa).

Belongs to the bacterial ribosomal protein bL17 family. Part of the 50S ribosomal subunit. Contacts protein L32.

This chain is Large ribosomal subunit protein bL17, found in Limosilactobacillus reuteri (strain DSM 20016) (Lactobacillus reuteri).